Here is a 510-residue protein sequence, read N- to C-terminus: Protein ERGIC-53 (510 aa).

The N-terminal stretch at 1-30 (MAGSRRRGLQARVRPLFCALLLSLSRFVGG) is a signal peptide. At 31–477 (DGVGGDPAAG…ELPPFPSCLS (447 aa)) the chain is on the lumenal side. The L-type lectin-like domain maps to 44 to 267 (RRFEYKYSFK…DVLSFLTFQL (224 aa)). A carbohydrate-binding residues include serine 88 and aspartate 121. Residues aspartate 152, phenylalanine 154, and asparagine 156 each contribute to the Ca(2+) site. Asparagine 156 and histidine 178 together coordinate a carbohydrate. Ca(2+) is bound at residue aspartate 181. The cysteines at positions 190 and 230 are disulfide-linked. Residue 251–253 (GGL) participates in a carbohydrate binding. Serine 425 carries the post-translational modification Phosphoserine. A helical transmembrane segment spans residues 478-498 (TVHFIIFVVVQTVLFIGYIMY). The Cytoplasmic portion of the chain corresponds to 499-510 (RSQQEAAAKKFF). The interval 499–510 (RSQQEAAAKKFF) is mediates interaction with RAB3GAP1, RAB3GAP2 and UBXN6. Residues 509-510 (FF) carry the ER export motif motif.

Exists both as a covalent disulfide-linked homohexamer, and a complex of three disulfide-linked dimers non-covalently kept together. Interacts with MCFD2. May interact with TMEM115. Interacts with RAB3GAP1 and RAB3GAP2. Interacts with UBXN6. Interacts with SERPINA1/alpha1-antitrypsin. Interacts with BET1.

It is found in the endoplasmic reticulum-Golgi intermediate compartment membrane. It localises to the golgi apparatus membrane. Its subcellular location is the endoplasmic reticulum membrane. In terms of biological role, mannose-specific lectin. May recognize sugar residues of glycoproteins, glycolipids, or glycosylphosphatidyl inositol anchors and may be involved in the sorting or recycling of proteins, lipids, or both. The LMAN1-MCFD2 complex forms a specific cargo receptor for the ER-to-Golgi transport of selected proteins. The polypeptide is Protein ERGIC-53 (LMAN1) (Chlorocebus aethiops (Green monkey)).